A 157-amino-acid chain; its full sequence is Small ribosomal subunit protein uS7 (157 aa).

This sequence belongs to the universal ribosomal protein uS7 family. Part of the 30S ribosomal subunit. Contacts proteins S9 and S11.

Its function is as follows. One of the primary rRNA binding proteins, it binds directly to 16S rRNA where it nucleates assembly of the head domain of the 30S subunit. Is located at the subunit interface close to the decoding center, probably blocks exit of the E-site tRNA. This chain is Small ribosomal subunit protein uS7, found in Psychrobacter sp. (strain PRwf-1).